Consider the following 365-residue polypeptide: Patr class I histocompatibility antigen, A-126 alpha chain (365 aa).

Positions 1–24 (MAVMAPRTLVLLLSGALALTQTWA) are cleaved as a signal peptide. The interval 25–114 (GSHSMRYFST…LRGYYNQSED (90 aa)) is alpha-1. Residues 25–308 (GSHSMRYFST…EPSSQPTIPI (284 aa)) are Extracellular-facing. Residue N110 is glycosylated (N-linked (GlcNAc...) asparagine). Positions 115–206 (GSHTIQLMFG…ENGKETLQRT (92 aa)) are alpha-2. 2 disulfide bridges follow: C125-C188 and C227-C283. The interval 207-298 (DPPKTHMTHH…GLPKPLTLRW (92 aa)) is alpha-3. The 87-residue stretch at 209–295 (PKTHMTHHPI…QHEGLPKPLT (87 aa)) folds into the Ig-like C1-type domain. Residues 299 to 308 (EPSSQPTIPI) are connecting peptide. The helical transmembrane segment at 309–332 (VGIIAGLVLLGAVITGAVVAAVMW) threads the bilayer. Over 333-365 (RRKSSDRKGGSYSQAASSDSAQGSDVSLTACKV) the chain is Cytoplasmic. Residues 338 to 365 (DRKGGSYSQAASSDSAQGSDVSLTACKV) are disordered. A compositionally biased stretch (low complexity) spans 342–359 (GSYSQAASSDSAQGSDVS). A Phosphoserine modification is found at S343. Y344 bears the Phosphotyrosine mark. Residues S345, S349, S352, S356, and S359 each carry the phosphoserine modification.

Belongs to the MHC class I family. In terms of assembly, heterodimer of an alpha chain and a beta chain (beta-2-microglobulin).

The protein resides in the membrane. In terms of biological role, involved in the presentation of foreign antigens to the immune system. The chain is Patr class I histocompatibility antigen, A-126 alpha chain (Patr-A) from Pan troglodytes (Chimpanzee).